The primary structure comprises 69 residues: uncharacterized protein (69 aa).

A signal peptide spans 1–21 (MNTKFILILLVLIISTIFVNS).

Its subcellular location is the secreted. This is an uncharacterized protein from Dictyostelium discoideum (Social amoeba).